We begin with the raw amino-acid sequence, 225 residues long: Urease accessory protein UreE (225 aa).

Over residues 171–215 (HHGHEHSHDHEHGHSHAAHEHSHGHDHTHGHDHDHGDHVHDESCG) the composition is skewed to basic and acidic residues. The tract at residues 171-225 (HHGHEHSHDHEHGHSHAAHEHSHGHDHTHGHDHDHGDHVHDESCGHGHHHHHAHR) is disordered. Basic residues predominate over residues 216–225 (HGHHHHHAHR).

It belongs to the UreE family.

Its subcellular location is the cytoplasm. Functionally, involved in urease metallocenter assembly. Binds nickel. Probably functions as a nickel donor during metallocenter assembly. The protein is Urease accessory protein UreE of Paraburkholderia xenovorans (strain LB400).